A 1396-amino-acid polypeptide reads, in one-letter code: DNA-directed RNA polymerase subunit beta' (1396 aa).

Zn(2+) contacts are provided by cysteine 73, cysteine 75, cysteine 88, and cysteine 91. Mg(2+) contacts are provided by aspartate 467, aspartate 469, and aspartate 471. Zn(2+)-binding residues include cysteine 817, cysteine 891, cysteine 898, and cysteine 901.

The protein belongs to the RNA polymerase beta' chain family. In terms of assembly, the RNAP catalytic core consists of 2 alpha, 1 beta, 1 beta' and 1 omega subunit. When a sigma factor is associated with the core the holoenzyme is formed, which can initiate transcription. The cofactor is Mg(2+). Zn(2+) serves as cofactor.

It catalyses the reaction RNA(n) + a ribonucleoside 5'-triphosphate = RNA(n+1) + diphosphate. DNA-dependent RNA polymerase catalyzes the transcription of DNA into RNA using the four ribonucleoside triphosphates as substrates. The protein is DNA-directed RNA polymerase subunit beta' of Orientia tsutsugamushi (strain Boryong) (Rickettsia tsutsugamushi).